Here is a 530-residue protein sequence, read N- to C-terminus: uncharacterized protein (530 aa).

Basic and acidic residues-rich tracts occupy residues 1 to 11 and 28 to 38; these read MTALNDTERAV and PRSEETASERP. The disordered stretch occupies residues 1 to 38; it reads MTALNDTERAVRNWTAGRPHRPAPMRPPRSEETASERP. The Cytoplasmic segment spans residues 1-50; sequence MTALNDTERAVRNWTAGRPHRPAPMRPPRSEETASERPSRYYPTWLPSRS. Residues 51–71 traverse the membrane as a helical segment; the sequence is FIAAVIAIGGMQLLATMDSTV. Residues 72–91 lie on the Extracellular side of the membrane; the sequence is AIVALPKIQNELSLSDAGRS. The chain crosses the membrane as a helical span at residues 92 to 112; it reads WVITAYVLTFGGLMLLGGRLG. At 113-119 the chain is on the cytoplasmic side; the sequence is DTIGRKR. The helical transmembrane segment at 120–140 threads the bilayer; that stretch reads TFIVGVALFTISSVLCAVAWD. Residues 141 to 150 are Extracellular-facing; it reads EATLVIARLS. Residues 151 to 171 traverse the membrane as a helical segment; it reads QGVGSAIASPTGLALVATTFP. The Cytoplasmic segment spans residues 172–180; the sequence is KGPARNAAT. Residues 181-201 traverse the membrane as a helical segment; sequence AVFAAMTAIGSVMGLVVGGAL. The Extracellular segment spans residues 202 to 203; the sequence is TE. The helical transmembrane segment at 204–224 threads the bilayer; sequence VSWRWAFLVNVPIGLVMIYLA. Residues 225-239 lie on the Cytoplasmic side of the membrane; it reads RTALRETNKERMKLD. A helical transmembrane segment spans residues 240-260; sequence ATGAILATLACTAAVFAFSIG. Residues 261 to 266 are Extracellular-facing; that stretch reads PEKGWM. The helical transmembrane segment at 267–287 threads the bilayer; sequence SGITIGSGLVALAAAVAFVIV. At 288–306 the chain is on the cytoplasmic side; that stretch reads ERTAENPVVPFHLFRDRNR. A helical transmembrane segment spans residues 307 to 327; the sequence is LVTFSAILLAGGVMFSLTVCI. Residues 328-343 lie on the Extracellular side of the membrane; sequence GLYVQDILGYSALRAG. Residues 344–364 form a helical membrane-spanning segment; it reads VGFIPFVIAMGIGLGVSSQLV. At 365–370 the chain is on the cytoplasmic side; it reads SRFSPR. A helical transmembrane segment spans residues 371-391; sequence VLTIGGGYLLFGAMLYGSFFM. The Extracellular segment spans residues 392 to 400; it reads HRGVPYFPN. The helical transmembrane segment at 401–421 threads the bilayer; sequence LVMPIVVGGIGIGMAVVPLTL. Residues 422-437 are Cytoplasmic-facing; the sequence is SAIAGVGFDQIGPVSA. Residues 438–458 form a helical membrane-spanning segment; the sequence is IALMLQSLGGPLVLAVIQAVI. The Extracellular segment spans residues 459–488; that stretch reads TSRTLYLGGTTGPVKFMNDVQLAALDHAYT. A helical transmembrane segment spans residues 489 to 509; it reads YGLLWVAGAAIIVGGMALFIG. At 510–530 the chain is on the cytoplasmic side; sequence YTPQQVAHAQEVKEAIDAGEL.

Belongs to the major facilitator superfamily.

It is found in the cell membrane. This is an uncharacterized protein from Mycobacterium tuberculosis (strain CDC 1551 / Oshkosh).